We begin with the raw amino-acid sequence, 437 residues long: Adenylosuccinate synthetase 1 (437 aa).

GTP is bound by residues 13-19 and 41-43; these read GDEGKGK and GHT. D14 functions as the Proton acceptor in the catalytic mechanism. Residues D14 and G41 each contribute to the Mg(2+) site. Residues 14-17, 39-42, T130, R144, Q225, T240, and R310 each bind IMP; these read DEGK and NAGH. H42 functions as the Proton donor in the catalytic mechanism. 306–312 lines the substrate pocket; sequence ATTGRLR. Residues R312, 338 to 340, and 421 to 423 each bind GTP; these read KLD and STG.

Belongs to the adenylosuccinate synthetase family. Homodimer. It depends on Mg(2+) as a cofactor.

It is found in the cytoplasm. It catalyses the reaction IMP + L-aspartate + GTP = N(6)-(1,2-dicarboxyethyl)-AMP + GDP + phosphate + 2 H(+). The protein operates within purine metabolism; AMP biosynthesis via de novo pathway; AMP from IMP: step 1/2. Plays an important role in the de novo pathway of purine nucleotide biosynthesis. Catalyzes the first committed step in the biosynthesis of AMP from IMP. This is Adenylosuccinate synthetase 1 from Pseudoalteromonas translucida (strain TAC 125).